A 123-amino-acid polypeptide reads, in one-letter code: Snaclec echicetin subunit beta (123 aa).

Positions N1–C121 constitute a C-type lectin domain. Intrachain disulfides connect C2–C13, C30–C119, and C96–C111.

Belongs to the snaclec family. In terms of assembly, heterodimer of subunits alpha and beta; disulfide-linked. Forms an active complex with the pentameric immunoglobuline Mkappa (IgMkappa). Expressed by the venom gland.

It is found in the secreted. In terms of biological role, echicetin itself inhibits aggregation of washed platelets induced by vWF, thrombin or alboaggregin-A. However, when complexed with the pentameric plasma immunoglobulin Mkappa (IgMkappa), echicetin binds specifically to GPIb and activates platelets. This is caused by P-selectin expression and activation of alpha-IIb/beta-3 as well as tyrosine phosphorylation of several signal transduction molecules, including p53/56(LYN), p64, p72(SYK), p70 to p90, and p120. In vivo, it induces thrombocytopenia when injected into mice, probably accounting of activation of platelets rather than inhibition. In Echis carinatus sochureki (Saw-scaled viper), this protein is Snaclec echicetin subunit beta.